The sequence spans 597 residues: mRNA-capping enzyme (597 aa).

The interval 1-212 (MAYNKIPPRW…DEDGKKDSEP (212 aa)) is TPase. One can recognise a Tyrosine-protein phosphatase domain in the interval 25–183 (LPLKTMLGPR…FRRYGDIEEA (159 aa)). Cys-126 functions as the Phosphocysteine intermediate in the catalytic mechanism. Positions 181 to 221 (EEAPPPPVLPDWCFEDEDEEDEDEDGKKDSEPGSSASFSKR) are disordered. Over residues 193–204 (CFEDEDEEDEDE) the composition is skewed to acidic residues. The segment at 229-597 (GAIFLEGITV…PPPKRLHRPT (369 aa)) is GTase. Lys-294 functions as the N6-GMP-lysine intermediate in the catalytic mechanism. GTP-binding positions include Arg-299, Arg-315, 343–345 (DGE), 458–460 (KWK), and 528–533 (RQRIDK). Positions 330 to 386 (RKDLRMHLSNTLLDGEMIIDKVNGQAVPRYLIYDIIKFNAQPVGDCDFNIRLQCIER) are interaction with POLR2A. The segment at 573–597 (KRKYPLDPDTELMPPPPPKRLHRPT) is disordered.

This sequence in the N-terminal section; belongs to the non-receptor class of the protein-tyrosine phosphatase family. The protein in the C-terminal section; belongs to the eukaryotic GTase family. As to quaternary structure, interacts with SUPT5H and RNMT. Interacts with POLR2A (via C-terminus); this enhances guanylyltransferase activity. Binds (via GTase domain) to the elongating phosphorylated form of RNA polymerase II; can form direct interactions with the phosphorylated POLR2A C-terminal domain and indirect interactions via bound RNA.

It localises to the nucleus. It carries out the reaction a 5'-end triphospho-ribonucleoside in mRNA + H2O = a 5'-end diphospho-ribonucleoside in mRNA + phosphate + H(+). The enzyme catalyses a 5'-end diphospho-ribonucleoside in mRNA + GTP + H(+) = a 5'-end (5'-triphosphoguanosine)-ribonucleoside in mRNA + diphosphate. RNA triphosphatase activity is inhibited by vanadate, iodoacetate and magnesium. Its function is as follows. Bifunctional mRNA-capping enzyme exhibiting RNA 5'-triphosphate monophosphatase activity in the N-terminal part and mRNA guanylyltransferase activity in the C-terminal part. Catalyzes the first two steps of cap formation: by removing the gamma-phosphate from the 5'-triphosphate end of nascent mRNA to yield a diphosphate end, and by transferring the GMP moiety of GTP to the 5'-diphosphate terminus of RNA via a covalent enzyme-GMP reaction intermediate. The protein is mRNA-capping enzyme (Rngtt) of Mus musculus (Mouse).